A 340-amino-acid polypeptide reads, in one-letter code: Ketol-acid reductoisomerase (NADP(+)) (340 aa).

The KARI N-terminal Rossmann domain maps to 1 to 182 (MRVYYDRDCD…GGGRSGIIET (182 aa)). NADP(+)-binding positions include 24-27 (YGSQ), Arg-48, Ser-51, Ser-53, and 83-86 (DELQ). His-108 is an active-site residue. NADP(+) is bound at residue Gly-134. Residues 183–329 (NFRQECETDL…EKLRGMMPWI (147 aa)) enclose the KARI C-terminal knotted domain. Residues Asp-191, Glu-195, Glu-227, and Glu-231 each coordinate Mg(2+). Substrate is bound at residue Ser-252.

Belongs to the ketol-acid reductoisomerase family. It depends on Mg(2+) as a cofactor.

It carries out the reaction (2R)-2,3-dihydroxy-3-methylbutanoate + NADP(+) = (2S)-2-acetolactate + NADPH + H(+). The enzyme catalyses (2R,3R)-2,3-dihydroxy-3-methylpentanoate + NADP(+) = (S)-2-ethyl-2-hydroxy-3-oxobutanoate + NADPH + H(+). It participates in amino-acid biosynthesis; L-isoleucine biosynthesis; L-isoleucine from 2-oxobutanoate: step 2/4. The protein operates within amino-acid biosynthesis; L-valine biosynthesis; L-valine from pyruvate: step 2/4. In terms of biological role, involved in the biosynthesis of branched-chain amino acids (BCAA). Catalyzes an alkyl-migration followed by a ketol-acid reduction of (S)-2-acetolactate (S2AL) to yield (R)-2,3-dihydroxy-isovalerate. In the isomerase reaction, S2AL is rearranged via a Mg-dependent methyl migration to produce 3-hydroxy-3-methyl-2-ketobutyrate (HMKB). In the reductase reaction, this 2-ketoacid undergoes a metal-dependent reduction by NADPH to yield (R)-2,3-dihydroxy-isovalerate. The sequence is that of Ketol-acid reductoisomerase (NADP(+)) from Cereibacter sphaeroides (strain ATCC 17025 / ATH 2.4.3) (Rhodobacter sphaeroides).